The chain runs to 361 residues: RNA-binding protein 4 (361 aa).

RRM domains are found at residues 2-72 (VKLF…ASKN) and 78-148 (TKLH…LSTS). Residue Lys79 forms a Glycyl lysine isopeptide (Lys-Gly) (interchain with G-Cter in SUMO2) linkage. Ser86 is modified (phosphoserine). The CCHC-type zinc finger occupies 160-177 (SGCYRCGKEGHWSKECPI). Residues 196–361 (AVRTPYTMSY…YADRARYSAF (166 aa)) form an interaction with TNPO3 region. The residue at position 306 (Ser306) is a Phosphoserine.

In terms of assembly, interacts with TNPO3; the interaction mediates nuclear import of the protein and is disrupted by nuclear Ran bound to GTP. Interacts with EIF4G1 and WT1. Interacts with EIF4A1; the interaction is modulated under stress-induced conditions. Interacts with AGO1. Interacts with AGO2; the interaction occurs under both cell proliferation and differentiation conditions and in an RNA- and phosphorylation-independent manner. Interacts with DDX5; the interaction occurs in an RNA-independent manner. Interacts with RBPMS; the interaction allows cooperative assembly of RNA-bound stable cell-specific alternative splicing regulatory complexes. In terms of processing, phosphorylated. Phosphorylated in vitro on Ser-306 by SRPK1. Phosphorylation on Ser-306 is induced upon cell stress signaling, which alters its subcellular localization and may modulate its activity on IRES-mediated mRNA translation. Phosphorylated. Phosphorylation on Ser-306 is induced upon cell muscle differentiation. As to expression, expressed in the suprachiasmatic nucleus (SCN). Expressed in myocytes; expression gradually increases during muscle cell differentiation (at protein level). Expressed in the suprachiasmatic nucleus (SCN).

It localises to the nucleus. Its subcellular location is the nucleolus. The protein resides in the nucleus speckle. The protein localises to the cytoplasm. It is found in the cytoplasmic granule. In terms of biological role, RNA-binding factor involved in multiple aspects of cellular processes like alternative splicing of pre-mRNA and translation regulation. Modulates alternative 5'-splice site and exon selection. Acts as a muscle cell differentiation-promoting factor. Activates exon skipping of the PTB pre-mRNA during muscle cell differentiation. Antagonizes the activity of the splicing factor PTBP1 to modulate muscle cell-specific exon selection of alpha tropomyosin. Binds to intronic pyrimidine-rich sequence of the TPM1 and MAPT pre-mRNAs. Required for the translational activation of PER1 mRNA in response to circadian clock. Binds directly to the 3'-UTR of the PER1 mRNA. Exerts a suppressive activity on Cap-dependent translation via binding to CU-rich responsive elements within the 3'UTR of mRNAs, a process increased under stress conditions or during myocytes differentiation. Recruits EIF4A1 to stimulate IRES-dependent translation initiation in respons to cellular stress. Associates to internal ribosome entry segment (IRES) in target mRNA species under stress conditions. Plays a role for miRNA-guided RNA cleavage and translation suppression by promoting association of AGO2-containing miRNPs with their cognate target mRNAs. Associates with miRNAs during muscle cell differentiation. Binds preferentially to 5'-CGCGCG[GCA]-3' motif in vitro. This Mus musculus (Mouse) protein is RNA-binding protein 4 (Rbm4).